Consider the following 411-residue polypeptide: Dual-specificity RNA methyltransferase RlmN (411 aa).

The active-site Proton acceptor is Glu-124. Residues 130-379 form the Radical SAM core domain; sequence EEGRGTLCIS…IRTPRGRDIL (250 aa). Residues Cys-137 and Cys-382 are joined by a disulfide bond. [4Fe-4S] cluster is bound by residues Cys-144, Cys-148, and Cys-151. S-adenosyl-L-methionine contacts are provided by residues 208–209, Ser-240, 262–264, and Asn-339; these read GE and SLH. Residue Cys-382 is the S-methylcysteine intermediate of the active site.

It belongs to the radical SAM superfamily. RlmN family. Requires [4Fe-4S] cluster as cofactor.

The protein localises to the cytoplasm. It catalyses the reaction adenosine(2503) in 23S rRNA + 2 reduced [2Fe-2S]-[ferredoxin] + 2 S-adenosyl-L-methionine = 2-methyladenosine(2503) in 23S rRNA + 5'-deoxyadenosine + L-methionine + 2 oxidized [2Fe-2S]-[ferredoxin] + S-adenosyl-L-homocysteine. The catalysed reaction is adenosine(37) in tRNA + 2 reduced [2Fe-2S]-[ferredoxin] + 2 S-adenosyl-L-methionine = 2-methyladenosine(37) in tRNA + 5'-deoxyadenosine + L-methionine + 2 oxidized [2Fe-2S]-[ferredoxin] + S-adenosyl-L-homocysteine. Specifically methylates position 2 of adenine 2503 in 23S rRNA and position 2 of adenine 37 in tRNAs. m2A2503 modification seems to play a crucial role in the proofreading step occurring at the peptidyl transferase center and thus would serve to optimize ribosomal fidelity. In Sinorhizobium fredii (strain NBRC 101917 / NGR234), this protein is Dual-specificity RNA methyltransferase RlmN.